Reading from the N-terminus, the 45-residue chain is CQNECCGISSLRERNYCANLVCINCFCQGRTYKICRCFFSIHAIR.

In terms of tissue distribution, expressed by the venom gland.

It is found in the secreted. In terms of biological role, inhibits potassium channels. This chain is Putative potassium channel blocker, found in Hottentotta tamulus (Eastern Indian scorpion).